The chain runs to 89 residues: Small ribosomal subunit protein uS15 (89 aa).

This sequence belongs to the universal ribosomal protein uS15 family. Part of the 30S ribosomal subunit. Forms a bridge to the 50S subunit in the 70S ribosome, contacting the 23S rRNA.

In terms of biological role, one of the primary rRNA binding proteins, it binds directly to 16S rRNA where it helps nucleate assembly of the platform of the 30S subunit by binding and bridging several RNA helices of the 16S rRNA. Functionally, forms an intersubunit bridge (bridge B4) with the 23S rRNA of the 50S subunit in the ribosome. The sequence is that of Small ribosomal subunit protein uS15 from Gloeobacter violaceus (strain ATCC 29082 / PCC 7421).